We begin with the raw amino-acid sequence, 415 residues long: Carbamoyl phosphate synthase arginine-specific small chain (415 aa).

Residues 1-17 (MLRFLKPFPLRFGKRFY) constitute a mitochondrion transit peptide. Positions 88, 272, and 274 each coordinate L-glutamine. In terms of domain architecture, Glutamine amidotransferase type-1 spans 225–412 (NIAVIDCGVK…IKEAIKYQKS (188 aa)). Cysteine 301 acts as the Nucleophile in catalysis. Residues methionine 302, glutamine 305, asparagine 343, glycine 345, and tyrosine 346 each coordinate L-glutamine. Catalysis depends on residues histidine 385 and glutamate 387.

Belongs to the CarA family. As to quaternary structure, heterodimer composed of 2 chains; the small (or glutamine) chain promotes the hydrolysis of glutamine to ammonia, which is used by the large (or ammonia) chain to synthesize carbamoyl phosphate.

Its subcellular location is the mitochondrion. It is found in the cytoplasm. The enzyme catalyses hydrogencarbonate + L-glutamine + 2 ATP + H2O = carbamoyl phosphate + L-glutamate + 2 ADP + phosphate + 2 H(+). The catalysed reaction is L-glutamine + H2O = L-glutamate + NH4(+). The protein operates within amino-acid biosynthesis; L-arginine biosynthesis; carbamoyl phosphate from bicarbonate: step 1/1. Functionally, small subunit of the arginine-specific carbamoyl phosphate synthase (CPSase). CPSase catalyzes the formation of carbamoyl phosphate from the ammonia moiety of glutamine, carbonate, and phosphate donated by ATP, the first step of the arginine biosynthetic pathway. The small subunit (glutamine amidotransferase) binds and cleaves glutamine to supply the large subunit with the substrate ammonia. This chain is Carbamoyl phosphate synthase arginine-specific small chain (arg5), found in Schizosaccharomyces pombe (strain 972 / ATCC 24843) (Fission yeast).